Here is a 93-residue protein sequence, read N- to C-terminus: Small ribosomal subunit protein uS19 (93 aa).

It belongs to the universal ribosomal protein uS19 family.

Its function is as follows. Protein S19 forms a complex with S13 that binds strongly to the 16S ribosomal RNA. This Kocuria rhizophila (strain ATCC 9341 / DSM 348 / NBRC 103217 / DC2201) protein is Small ribosomal subunit protein uS19.